Consider the following 440-residue polypeptide: MQKTITPLSPTEQELEIILSAEEFGPEYNKELDEAKRTVHIKGFRKGHAPMGLLKKLAGPSIEIAVAEKLGGKYFTDIITAENIKPANRAQIADFAFTDDTLTLKLVYEIHPEFELQDFSGYTFTKANYVVGDKEVEREIELILKSHGTMVTSDEPASEKDTVIGDALRFNDEGELDEASKVANHHFSMEYLPAENPFRIALLGKKAGDVVEVVNTPIKEDEEGEEATAEDAEAVKPTRFQVTVTEVKRLELPELDDELVKEISQERFDNVADFKADVRLQLEQHFTMKSDNDLLEAISGKMVEENPVPVPNSMVESFQDMLLENAKRQLSGNFPKGFDVTGFRASMRDNAEKHARWMLITQKVAEMNKLTVTDEDIVAFAEKEAGKNEALDIKQIIETYKSPDFHDYIADSIMKEKVYNAITEKVTVTEEETPVPEHRM.

The PPIase FKBP-type domain maps to 160–253 (KDTVIGDALR…VTEVKRLELP (94 aa)).

The protein belongs to the FKBP-type PPIase family. Tig subfamily.

Its subcellular location is the cytoplasm. It carries out the reaction [protein]-peptidylproline (omega=180) = [protein]-peptidylproline (omega=0). Its function is as follows. Involved in protein export. Acts as a chaperone by maintaining the newly synthesized protein in an open conformation. Functions as a peptidyl-prolyl cis-trans isomerase. This chain is Trigger factor, found in Chlorobium chlorochromatii (strain CaD3).